A 298-amino-acid polypeptide reads, in one-letter code: NFU1 iron-sulfur cluster scaffold homolog, mitochondrial (298 aa).

The tract at residues 194–262 (IKELLDTRIR…IPEVESVEQV (69 aa)) is nifU. C231 and C234 together coordinate [4Fe-4S] cluster.

The protein belongs to the NifU family.

The protein resides in the mitochondrion. Its function is as follows. Molecular scaffold for [Fe-S] cluster assembly of mitochondrial iron-sulfur proteins. The chain is NFU1 iron-sulfur cluster scaffold homolog, mitochondrial from Drosophila grimshawi (Hawaiian fruit fly).